The following is a 174-amino-acid chain: Large ribosomal subunit protein uL16 (174 aa).

The protein belongs to the universal ribosomal protein uL16 family.

The sequence is that of Large ribosomal subunit protein uL16 from Staphylothermus marinus (strain ATCC 43588 / DSM 3639 / JCM 9404 / F1).